A 182-amino-acid polypeptide reads, in one-letter code: ATP synthase subunit delta (182 aa).

This sequence belongs to the ATPase delta chain family. As to quaternary structure, F-type ATPases have 2 components, F(1) - the catalytic core - and F(0) - the membrane proton channel. F(1) has five subunits: alpha(3), beta(3), gamma(1), delta(1), epsilon(1). CF(0) has four main subunits: a(1), b(1), b'(1) and c(10-14). The alpha and beta chains form an alternating ring which encloses part of the gamma chain. F(1) is attached to F(0) by a central stalk formed by the gamma and epsilon chains, while a peripheral stalk is formed by the delta, b and b' chains.

The protein localises to the cellular thylakoid membrane. F(1)F(0) ATP synthase produces ATP from ADP in the presence of a proton or sodium gradient. F-type ATPases consist of two structural domains, F(1) containing the extramembraneous catalytic core and F(0) containing the membrane proton channel, linked together by a central stalk and a peripheral stalk. During catalysis, ATP synthesis in the catalytic domain of F(1) is coupled via a rotary mechanism of the central stalk subunits to proton translocation. Functionally, this protein is part of the stalk that links CF(0) to CF(1). It either transmits conformational changes from CF(0) to CF(1) or is implicated in proton conduction. The sequence is that of ATP synthase subunit delta from Synechococcus sp. (strain CC9605).